The chain runs to 99 residues: A-type ATP synthase subunit F (99 aa).

Belongs to the V-ATPase F subunit family. In terms of assembly, has multiple subunits with at least A(3), B(3), C, D, E, F, H, I and proteolipid K(x).

It localises to the cell membrane. In terms of biological role, component of the A-type ATP synthase that produces ATP from ADP in the presence of a proton gradient across the membrane. The protein is A-type ATP synthase subunit F of Methanococcus vannielii (strain ATCC 35089 / DSM 1224 / JCM 13029 / OCM 148 / SB).